Consider the following 416-residue polypeptide: Tyrosine--tRNA ligase (416 aa).

Tyrosine 34 is a binding site for L-tyrosine. The 'HIGH' region motif lies at 39–48; it reads PTGDSLHIGH. L-tyrosine contacts are provided by tyrosine 165 and glutamine 169. The 'KMSKS' region signature appears at 227 to 231; sequence KFGKT. Lysine 230 contributes to the ATP binding site. Residues 349-416 form the S4 RNA-binding domain; it reads ENIIIWLTDN…KKHYYLARVK (68 aa).

It belongs to the class-I aminoacyl-tRNA synthetase family. TyrS type 1 subfamily. In terms of assembly, homodimer.

It localises to the cytoplasm. The enzyme catalyses tRNA(Tyr) + L-tyrosine + ATP = L-tyrosyl-tRNA(Tyr) + AMP + diphosphate + H(+). In terms of biological role, catalyzes the attachment of tyrosine to tRNA(Tyr) in a two-step reaction: tyrosine is first activated by ATP to form Tyr-AMP and then transferred to the acceptor end of tRNA(Tyr). The chain is Tyrosine--tRNA ligase from Limosilactobacillus reuteri (strain DSM 20016) (Lactobacillus reuteri).